We begin with the raw amino-acid sequence, 259 residues long: HTH-type quorum sensing-dependent transcriptional regulator VjbR (259 aa).

Residues 76 to 179 (KNYFAIDPVF…AGIIHGTVCG (104 aa)) are C12-HSL binding. In terms of domain architecture, HTH luxR-type spans 183-248 (ANSVASLLTP…SAVATALSLG (66 aa)). Positions 207-226 (DGEIAEILSIARWTVVTYLQ) form a DNA-binding region, H-T-H motif.

Its function is as follows. Transcriptional regulator involved in the global control of Brucella gene expression. Mediates the effects of the quorum sensing autoinducer C12-HSL (N-dodecanoyl-homoserine lactone) on a large and diverse number of genes. In Brucella ovis (strain ATCC 25840 / 63/290 / NCTC 10512), this protein is HTH-type quorum sensing-dependent transcriptional regulator VjbR (vjbR).